The following is a 206-amino-acid chain: GTP cyclohydrolase 1 (206 aa).

Residues Cys-95, His-98, and Cys-166 each coordinate Zn(2+).

It belongs to the GTP cyclohydrolase I family. In terms of assembly, toroid-shaped homodecamer, composed of two pentamers of five dimers.

It carries out the reaction GTP + H2O = 7,8-dihydroneopterin 3'-triphosphate + formate + H(+). It participates in cofactor biosynthesis; 7,8-dihydroneopterin triphosphate biosynthesis; 7,8-dihydroneopterin triphosphate from GTP: step 1/1. The chain is GTP cyclohydrolase 1 from Bartonella bacilliformis (strain ATCC 35685 / KC583 / Herrer 020/F12,63).